Consider the following 1391-residue polypeptide: Nuclear pore complex protein Nup155 (1391 aa).

S526 carries O-linked (GlcNAc) serine glycosylation. Disordered regions lie at residues 604 to 630 (SSSP…AQPP) and 985 to 1012 (QSKA…NMLS). S1057 carries the post-translational modification Phosphoserine.

Belongs to the non-repetitive/WGA-negative nucleoporin family. As to quaternary structure, interacts with GLE1 and NUP35/NUP53. Able to form a heterotrimer with GLE1 and NUP42 in vitro. Forms a complex with NUP35, NUP93, NUP205 and lamin B. In terms of processing, phosphorylated. Phosphorylation and dephosphorylation may be important for the function of NUP155 and may play a role in the reversible disassembly of the nuclear pore complex during mitosis. Post-translationally, disulfide-linked to NUP62. The inner channel of the NPC has a different redox environment from the cytoplasm and allows the formation of interchain disulfide bonds between some nucleoporins, the significant increase of these linkages upon oxidative stress reduces the permeability of the NPC.

It localises to the nucleus. It is found in the nuclear pore complex. Its subcellular location is the nucleus membrane. Essential component of nuclear pore complex. Could be essessential for embryogenesis. Nucleoporins may be involved both in binding and translocating proteins during nucleocytoplasmic transport. The polypeptide is Nuclear pore complex protein Nup155 (Nup155) (Mus musculus (Mouse)).